The sequence spans 263 residues: Acyl-[acyl-carrier-protein]--UDP-N-acetylglucosamine O-acyltransferase (263 aa).

It belongs to the transferase hexapeptide repeat family. LpxA subfamily. As to quaternary structure, homotrimer.

It is found in the cytoplasm. It carries out the reaction a (3R)-hydroxyacyl-[ACP] + UDP-N-acetyl-alpha-D-glucosamine = a UDP-3-O-[(3R)-3-hydroxyacyl]-N-acetyl-alpha-D-glucosamine + holo-[ACP]. The protein operates within glycolipid biosynthesis; lipid IV(A) biosynthesis; lipid IV(A) from (3R)-3-hydroxytetradecanoyl-[acyl-carrier-protein] and UDP-N-acetyl-alpha-D-glucosamine: step 1/6. In terms of biological role, involved in the biosynthesis of lipid A, a phosphorylated glycolipid that anchors the lipopolysaccharide to the outer membrane of the cell. This chain is Acyl-[acyl-carrier-protein]--UDP-N-acetylglucosamine O-acyltransferase, found in Campylobacter jejuni subsp. jejuni serotype O:6 (strain 81116 / NCTC 11828).